The primary structure comprises 424 residues: GTPase Obg (424 aa).

The Obg domain occupies 1 to 158 (MFVDKARIFV…RWISLELKLL (158 aa)). The region spanning 159–331 (ADVGLIGFPN…LLKECARVLS (173 aa)) is the OBG-type G domain. GTP is bound by residues 165-172 (GFPNVGKS), 190-194 (FTTIT), 212-215 (DIPG), 282-285 (NKAD), and 312-314 (SAA). Mg(2+) contacts are provided by S172 and T192. In terms of domain architecture, OCT spans 345-424 (RFVPEDKHFT…LNDFEFEFLK (80 aa)).

It belongs to the TRAFAC class OBG-HflX-like GTPase superfamily. OBG GTPase family. In terms of assembly, monomer. It depends on Mg(2+) as a cofactor.

The protein localises to the cytoplasm. An essential GTPase which binds GTP, GDP and possibly (p)ppGpp with moderate affinity, with high nucleotide exchange rates and a fairly low GTP hydrolysis rate. Plays a role in control of the cell cycle, stress response, ribosome biogenesis and in those bacteria that undergo differentiation, in morphogenesis control. This is GTPase Obg from Clostridium acetobutylicum (strain ATCC 824 / DSM 792 / JCM 1419 / IAM 19013 / LMG 5710 / NBRC 13948 / NRRL B-527 / VKM B-1787 / 2291 / W).